Consider the following 219-residue polypeptide: Ribonuclease T (219 aa).

In terms of domain architecture, Exonuclease spans 20 to 194 (VVIDIETAGF…YDSLQTANLF (175 aa)). Mg(2+) is bound by residues aspartate 23, glutamate 25, histidine 181, and aspartate 186. Histidine 181 acts as the Proton donor/acceptor in catalysis.

The protein belongs to the RNase T family. In terms of assembly, homodimer. It depends on Mg(2+) as a cofactor.

Functionally, trims short 3' overhangs of a variety of RNA species, leaving a one or two nucleotide 3' overhang. Responsible for the end-turnover of tRNA: specifically removes the terminal AMP residue from uncharged tRNA (tRNA-C-C-A). Also appears to be involved in tRNA biosynthesis. The chain is Ribonuclease T from Buchnera aphidicola subsp. Schizaphis graminum (strain Sg).